Reading from the N-terminus, the 460-residue chain is MSNKMWGGRFGEGPDRIMEEINASIGFDQRFFAQDIRGSKAHCRMLAEKGIISSEDAAQIVAGLDVVLAEIENGTFHFKRELEDIHMNVESRLADLIGAAAGRLHTARSRNDQVATDFKLYIRDTIDHLDEQLADFQRALVDRAEEHAATIMPGFTHLQTAQPVTFGHHCLAYAEMAGRDRGRLADARRRLNESPLGAAALAGTSFPIDRHMTAAELGFDGPTRNSLDSVSDRDFVLETLSAAAIAATHLSRLAEEIVIWSTPGFDFVRLTDGFTTGSSIMPQKRNPDAAELVRAKSGRVIGDLTSLLIVMKGLPLAYSKDMQEDKEAAFDALDALSLSLAAMTGMVRTLTVNETAMRNAASRGFSTATDLADWLVRALGLPFRQAHHATGALVAKAEKKGTDLDGLTLAEMQEVEPGITDEVYSVLGVDNSVASRTSFGGTAPDNIRAAVRRWRDELGS.

It belongs to the lyase 1 family. Argininosuccinate lyase subfamily.

The protein localises to the cytoplasm. It carries out the reaction 2-(N(omega)-L-arginino)succinate = fumarate + L-arginine. Its pathway is amino-acid biosynthesis; L-arginine biosynthesis; L-arginine from L-ornithine and carbamoyl phosphate: step 3/3. This chain is Argininosuccinate lyase, found in Parvibaculum lavamentivorans (strain DS-1 / DSM 13023 / NCIMB 13966).